The primary structure comprises 278 residues: Large ribosomal subunit protein uL2 (278 aa).

The segment at 226-278 is disordered; that stretch reads NPIDHPHGGGEGRTSGGRHPVTPWGKPTKGKKTRSNKSTDKFILISRHKRKKK.

It belongs to the universal ribosomal protein uL2 family. In terms of assembly, part of the 50S ribosomal subunit. Forms a bridge to the 30S subunit in the 70S ribosome.

Functionally, one of the primary rRNA binding proteins. Required for association of the 30S and 50S subunits to form the 70S ribosome, for tRNA binding and peptide bond formation. It has been suggested to have peptidyltransferase activity; this is somewhat controversial. Makes several contacts with the 16S rRNA in the 70S ribosome. The sequence is that of Large ribosomal subunit protein uL2 from Rhodopseudomonas palustris (strain HaA2).